A 455-amino-acid chain; its full sequence is Lysine histidine transporter-like 4 (455 aa).

Over Met1 to Tyr38 the chain is Cytoplasmic. Residues Ser39–Met59 form a helical membrane-spanning segment. Residues Ser60–Glu61 lie on the Extracellular side of the membrane. The helical transmembrane segment at Leu62–Leu82 threads the bilayer. Over Trp83–Gly113 the chain is Cytoplasmic. The helical transmembrane segment at Leu114–Val134 threads the bilayer. Over Thr135 to Arg158 the chain is Extracellular. Residues Ile159 to Phe179 traverse the membrane as a helical segment. Residues Asn180–Ser181 are Cytoplasmic-facing. Residues Ile182–Val202 traverse the membrane as a helical segment. Over Ala203–Pro226 the chain is Extracellular. Residues Leu227–Leu247 form a helical membrane-spanning segment. The Cytoplasmic segment spans residues Glu248–Lys267. The chain crosses the membrane as a helical span at residues Gly268 to Phe288. The Extracellular portion of the chain corresponds to Lys289–Thr307. A helical membrane pass occupies residues Ala308 to Tyr328. At Ala329–Arg357 the chain is on the cytoplasmic side. A helical membrane pass occupies residues Trp358 to Leu378. Ser379 is a topological domain (extracellular). Residues Phe380 to Ile400 form a helical membrane-spanning segment. Over Leu401–Cys412 the chain is Cytoplasmic. A helical membrane pass occupies residues Met413–Leu433. Over Ala434–His455 the chain is Extracellular.

Belongs to the amino acid/polyamine transporter 2 family. Amino acid/auxin permease (AAAP) (TC 2.A.18.2) subfamily.

It is found in the cell membrane. Functionally, amino acid transporter. In Arabidopsis thaliana (Mouse-ear cress), this protein is Lysine histidine transporter-like 4.